The sequence spans 301 residues: Hydroxymethylglutaryl-CoA lyase (301 aa).

The 268-residue stretch at 4–271 (VKVFEVGPRD…STGVDLEAVA (268 aa)) folds into the Pyruvate carboxyltransferase domain. Position 12 (arginine 12) interacts with substrate. A divalent metal cation-binding residues include aspartate 13, histidine 204, and histidine 206. Residue cysteine 237 is part of the active site. A divalent metal cation is bound at residue asparagine 246.

This sequence belongs to the HMG-CoA lyase family.

It carries out the reaction (3S)-3-hydroxy-3-methylglutaryl-CoA = acetoacetate + acetyl-CoA. Its pathway is metabolic intermediate metabolism; (S)-3-hydroxy-3-methylglutaryl-CoA degradation; acetoacetate from (S)-3-hydroxy-3-methylglutaryl-CoA: step 1/1. Functionally, involved in the catabolism of branched amino acids such as leucine. The protein is Hydroxymethylglutaryl-CoA lyase (mvaB) of Pseudomonas mevalonii.